The following is a 122-amino-acid chain: MSRIITAPHIGIEKLSAISLEELSCGLPERYALPPDGHPVEPHLERLYPTAQSKRSLWDFASPGYTFHGLHRAQDYRRELDTLQSLLTTSQSSELQAAAALLKCQQDDDRLLQIILNLLHKV.

The stretch at 71–87 (HRAQDYRRELDTLQSLL) forms a coiled coil.

Interacts with YscY.

Its subcellular location is the secreted. Its function is as follows. Required for Yop secretion. This Yersinia enterocolitica serotype O:8 / biotype 1B (strain NCTC 13174 / 8081) protein is Yop proteins translocation protein X (yscX).